Reading from the N-terminus, the 303-residue chain is tRNA dimethylallyltransferase (303 aa).

13-20 (GPTASGKS) is an ATP binding site. 15–20 (TASGKS) contributes to the substrate binding site. Interaction with substrate tRNA regions lie at residues 38–41 (DSMQ) and 162–166 (QRLLR).

The protein belongs to the IPP transferase family. As to quaternary structure, monomer. It depends on Mg(2+) as a cofactor.

It carries out the reaction adenosine(37) in tRNA + dimethylallyl diphosphate = N(6)-dimethylallyladenosine(37) in tRNA + diphosphate. In terms of biological role, catalyzes the transfer of a dimethylallyl group onto the adenine at position 37 in tRNAs that read codons beginning with uridine, leading to the formation of N6-(dimethylallyl)adenosine (i(6)A). The protein is tRNA dimethylallyltransferase of Methylocella silvestris (strain DSM 15510 / CIP 108128 / LMG 27833 / NCIMB 13906 / BL2).